The chain runs to 343 residues: Pseudaminic acid synthase (343 aa).

The 57-residue stretch at 287-343 folds into the AFP-like domain; sequence SLYASKDIKKGEIFSEENVKSVRPSFGLHPKFYQELLGKKASKDIEFGDALKESDFR.

It belongs to the pseudaminic acid synthase family. Requires a divalent metal cation as cofactor.

It catalyses the reaction 2,4-diacetamido-2,4,6-trideoxy-beta-L-altrose + phosphoenolpyruvate + H2O = pseudaminate + phosphate. Catalyzes the fifth step in the biosynthesis of pseudaminic acid, a sialic-acid-like sugar that is used to modify flagellin. Catalyzes the condensation of phosphoenolpyruvate with 2,4-diacetamido-2,4,6-trideoxy-beta-l-altropyranose, forming pseudaminic acid. The sequence is that of Pseudaminic acid synthase (pseI) from Campylobacter jejuni subsp. jejuni serotype O:23/36 (strain 81-176).